A 57-amino-acid chain; its full sequence is Benzylsuccinate synthase gamma subunit (57 aa).

As to quaternary structure, heterohexamer composed of 2 alpha subunits, 2 beta subunits and 2 gamma subunits.

It catalyses the reaction toluene + fumarate = 2-benzylsuccinate. It participates in xenobiotic degradation; toluene degradation. Activated by the benzylsuccinate synthase activating enzyme BssD. Rapidly inactivated by oxygen. In terms of biological role, catalyzes the addition of fumarate to the methyl group of toluene, leading to the formation of benzylsuccinate. The chain is Benzylsuccinate synthase gamma subunit (bssC) from Thauera aromatica.